Reading from the N-terminus, the 594-residue chain is Probable Xaa-Pro aminopeptidase P (594 aa).

Residues Asp391, Asp402, Glu500, and Glu514 each contribute to the Mn(2+) site.

Belongs to the peptidase M24B family. Mn(2+) serves as cofactor.

The catalysed reaction is Release of any N-terminal amino acid, including proline, that is linked to proline, even from a dipeptide or tripeptide.. Catalyzes the removal of a penultimate prolyl residue from the N-termini of peptides. The polypeptide is Probable Xaa-Pro aminopeptidase P (ampp) (Pyrenophora tritici-repentis (strain Pt-1C-BFP) (Wheat tan spot fungus)).